A 152-amino-acid polypeptide reads, in one-letter code: ESAT-6 secretion machinery protein EssA (152 aa).

Residues 1–114 are Cytoplasmic-facing; sequence MLMNSVIALT…PYIQNKQEKK (114 aa). The interval 62 to 83 is disordered; it reads ERQQQIKNDMFQNQASHSTRLN. The segment covering 66–80 has biased composition (polar residues); the sequence is QIKNDMFQNQASHST. The helical transmembrane segment at 115–135 threads the bilayer; it reads IFPYILMSVGAFLTLGFVIFS. The Extracellular portion of the chain corresponds to 136–152; it reads IHKGRRTKNESARKSNI.

This sequence belongs to the EssA family.

Its subcellular location is the cell membrane. Component of the ESAT-6 secretion system (Ess). Required for the secretion of EsxA and EsxB. The sequence is that of ESAT-6 secretion machinery protein EssA from Staphylococcus aureus (strain COL).